The following is a 103-amino-acid chain: Non-histone chromosomal protein HMG-14B (103 aa).

Positions 1–103 (MPKRKVAASR…AVEKEEVKSE (103 aa)) are disordered. Positions 29–50 (VPDKAEPKAKALAAKDKSENKK) are enriched in basic and acidic residues. Over residues 51-60 (AQSKGKKGPK) the composition is skewed to basic residues. A compositionally biased stretch (basic and acidic residues) spans 94–103 (AVEKEEVKSE).

It belongs to the HMGN family.

The protein resides in the nucleus. Its function is as follows. Binds to the inner side of the nucleosomal DNA thus altering the interaction between the DNA and the histone octamer. May be involved in the process which maintains transcribable genes in a unique chromatin conformation. This Gallus gallus (Chicken) protein is Non-histone chromosomal protein HMG-14B (HMG14).